The primary structure comprises 474 residues: Selection and upkeep of intraepithelial T-cells protein 4 (474 aa).

An N-terminal signal peptide occupies residues 1 to 25; sequence MGATEVLTSYCVVLCLLQMVALSSG. Topologically, residues 26 to 241 are extracellular; the sequence is HFTVIGSQRP…VLSGELFSWK (216 aa). One can recognise an Ig-like V-type domain in the interval 27-140; that stretch reads FTVIGSQRPI…EEHITEVKVT (114 aa). 2 disulfide bridges follow: cysteine 48-cysteine 122 and cysteine 162-cysteine 216. 2 N-linked (GlcNAc...) asparagine glycosylation sites follow: asparagine 111 and asparagine 199. Residues 141-234 enclose the Ig-like C1-type domain; it reads ATSSDIQILM…QEQSINIVLS (94 aa). The chain crosses the membrane as a helical span at residues 242–262; sequence IVWIMILSTISFVMIDFCMTY. At 263 to 298 the chain is on the cytoplasmic side; sequence CVQQQLIHEESLSTVDNDQCESDQSEGTCYKRNYPW. Residues 299 to 319 traverse the membrane as a helical segment; it reads IIIAVVPIISVFAIIGVMLFL. Residues 320–341 lie on the Extracellular side of the membrane; the sequence is HLEQRVTILEQHFELDTLWLED. The chain crosses the membrane as a helical span at residues 342–362; the sequence is ISVILCVVIVSNINLIPLIYF. Residues 363-381 are Cytoplasmic-facing; that stretch reads RLHEHVPRFKDRSPILNKA. A helical transmembrane segment spans residues 382-402; the sequence is VVFLHFIYFSIVCGTILLVHL. Residues 403–420 lie on the Extracellular side of the membrane; it reads QLRNKVSISDSLFSLYNS. A helical transmembrane segment spans residues 421–441; that stretch reads WLTDISMILGFLLSIFIVTTI. Over 442 to 474 the chain is Cytoplasmic; that stretch reads AKSSLFNKKWCIGLCIHMKEAEATGGPCEGEEL.

The protein belongs to the SKINT family. Expressed in skin, thymus and, to a lower extent, bladder and testis.

It localises to the membrane. Its function is as follows. May act by engaging a cell surface molecule on immature T-cells in the embryonic thymus. This chain is Selection and upkeep of intraepithelial T-cells protein 4 (Skint4), found in Mus musculus (Mouse).